We begin with the raw amino-acid sequence, 357 residues long: Protein RecA (357 aa).

79 to 86 (GPESSGKT) is an ATP binding site.

This sequence belongs to the RecA family.

The protein resides in the cytoplasm. Its function is as follows. Can catalyze the hydrolysis of ATP in the presence of single-stranded DNA, the ATP-dependent uptake of single-stranded DNA by duplex DNA, and the ATP-dependent hybridization of homologous single-stranded DNAs. It interacts with LexA causing its activation and leading to its autocatalytic cleavage. This Chloroherpeton thalassium (strain ATCC 35110 / GB-78) protein is Protein RecA.